Consider the following 687-residue polypeptide: Chloride channel protein ClC-Ka (687 aa).

4 helical membrane-spanning segments follow: residues 52–72, 161–181, 202–222, and 236–256; these read FLMT…FALG, LFLG…AYLG, VAGA…GVLF, and YWRG…LAVF. Ca(2+) contacts are provided by glutamate 259, glutamate 261, aspartate 278, and glutamate 281. 6 helical membrane passes run 282–302, 325–345, 396–416, 417–437, 452–472, and 486–506; these read IFFF…YLYC, PLYA…PGVG, FTIF…LILA, TTIP…AAIG, IVAG…AGAA, and LLAF…MAVL. Over 507-687 the chain is Cytoplasmic; that stretch reads AANAIAQSCQ…SALTNPPPAK (181 aa). CBS domains lie at 551-612 and 628-686; these read MRRA…ARAS and TEPV…PPPA.

It belongs to the chloride channel (TC 2.A.49) family. CLCNKA subfamily. In terms of assembly, homodimer. Interacts with BSND. Expressed predominantly in the kidney.

It is found in the basolateral cell membrane. It catalyses the reaction chloride(in) = chloride(out). The catalysed reaction is bromide(in) = bromide(out). It carries out the reaction nitrate(in) = nitrate(out). The enzyme catalyses iodide(out) = iodide(in). Its function is as follows. Anion-selective channel permeable to small monovalent anions with ion selectivity for chloride &gt; bromide &gt; nitrate &gt; iodide. Forms a homodimeric channel where each subunit has its own ion conduction pathway. May conduct double-barreled currents controlled by two types of gates, two fast gates that control each subunit independently and a slow common gate that opens and shuts off both subunits simultaneously. Assembles with the regulatory subunit BSND/Barttin for sorting at the basolateral plasma membrane domain and functional switch to the ion conducting state. CLCNKA:BSND channels display mostly a linear current-voltage relationship with fast gating at negative potentials. Mediates transepithelial chloride transport from the lumen to interstitial compartment along the thin ascending limb of Henle's loop, contributing to generation of hypertonic medullary interstitium as a countercurrent system to achieve urine concentration. Conducts chloride currents in the stria vascularis of the inner ear to establish the endocochlear potential necessary for normal hearing. The chain is Chloride channel protein ClC-Ka (CLCNKA) from Oryctolagus cuniculus (Rabbit).